A 298-amino-acid polypeptide reads, in one-letter code: Fluorinase (298 aa).

Residues D14, 19–21, Y75, S156, D209, N214, 268–269, and 276–278 each bind S-adenosyl-L-methionine; these read DDS, SR, and RNA.

The protein belongs to the SAM hydrolase / SAM-dependent halogenase family.

It catalyses the reaction fluoride + S-adenosyl-L-methionine = 5'-deoxy-5'-fluoroadenosine + L-methionine. Catalyzes the formation of a C-F bond by combining S-adenosyl-L-methionine (SAM) and fluoride to generate 5'-fluoro-5'-deoxyadenosine (5'-FDA) and L-methionine. The chain is Fluorinase from Actinoplanes sp. (strain N902-109).